Here is a 507-residue protein sequence, read N- to C-terminus: Nuclear poly(A) polymerase 3 (507 aa).

ATP contacts are provided by residues 79–81, 91–94, Asp147, Lys208, Tyr217, and 226–227; these read YGS, SDID, and GV. 3 residues coordinate Mg(2+): Asp92, Asp94, and Asp147.

This sequence belongs to the poly(A) polymerase family. Monomer. Forms a complex with cleavage and polyadenylation specificity factor (CPSF) subunits FIPS5 and CPSF30. Requires Mg(2+) as cofactor. The cofactor is Mn(2+). As to expression, expressed in leaves (mostly in petioles and tips), cotyledon, roots (tips, vascular tissue of the radicle, and throughout the root tissue excluding the elongation zone), stems, and flowers (restricted to the stigma and the pollen in mature anthers). Active in the primary and secondary root systems.

The protein resides in the nucleus. The catalysed reaction is RNA(n) + ATP = RNA(n)-3'-adenine ribonucleotide + diphosphate. In terms of biological role, essential protein. Polymerase that creates the 3'-poly(A) tail of mRNA's. Also required for the endoribonucleolytic cleavage reaction at some polyadenylation sites. May acquire specificity through interaction with a cleavage and polyadenylation specificity factor (CPSF) at its C-terminus. The protein is Nuclear poly(A) polymerase 3 of Arabidopsis thaliana (Mouse-ear cress).